A 130-amino-acid polypeptide reads, in one-letter code: Glycine cleavage system H protein (130 aa).

The Lipoyl-binding domain maps to 25-107 (IATIGITEFA…YGEGWFLKVR (83 aa)). K66 carries the post-translational modification N6-lipoyllysine.

The protein belongs to the GcvH family. As to quaternary structure, the glycine cleavage system is composed of four proteins: P, T, L and H. The cofactor is (R)-lipoate.

Functionally, the glycine cleavage system catalyzes the degradation of glycine. The H protein shuttles the methylamine group of glycine from the P protein to the T protein. In Trichormus variabilis (strain ATCC 29413 / PCC 7937) (Anabaena variabilis), this protein is Glycine cleavage system H protein.